The chain runs to 465 residues: ATP synthase subunit beta (465 aa).

152-159 (GGAGVGKT) is an ATP binding site.

It belongs to the ATPase alpha/beta chains family. F-type ATPases have 2 components, CF(1) - the catalytic core - and CF(0) - the membrane proton channel. CF(1) has five subunits: alpha(3), beta(3), gamma(1), delta(1), epsilon(1). CF(0) has three main subunits: a(1), b(2) and c(9-12). The alpha and beta chains form an alternating ring which encloses part of the gamma chain. CF(1) is attached to CF(0) by a central stalk formed by the gamma and epsilon chains, while a peripheral stalk is formed by the delta and b chains.

The protein resides in the cell membrane. It catalyses the reaction ATP + H2O + 4 H(+)(in) = ADP + phosphate + 5 H(+)(out). Its function is as follows. Produces ATP from ADP in the presence of a proton gradient across the membrane. The catalytic sites are hosted primarily by the beta subunits. This chain is ATP synthase subunit beta, found in Ruminiclostridium cellulolyticum (strain ATCC 35319 / DSM 5812 / JCM 6584 / H10) (Clostridium cellulolyticum).